The chain runs to 337 residues: 5-dehydro-2-deoxygluconokinase (337 aa).

The protein belongs to the carbohydrate kinase PfkB family.

The enzyme catalyses 5-dehydro-2-deoxy-D-gluconate + ATP = 6-phospho-5-dehydro-2-deoxy-D-gluconate + ADP + H(+). It participates in polyol metabolism; myo-inositol degradation into acetyl-CoA; acetyl-CoA from myo-inositol: step 5/7. Functionally, catalyzes the phosphorylation of 5-dehydro-2-deoxy-D-gluconate (2-deoxy-5-keto-D-gluconate or DKG) to 6-phospho-5-dehydro-2-deoxy-D-gluconate (DKGP). In Geobacillus thermodenitrificans (strain NG80-2), this protein is 5-dehydro-2-deoxygluconokinase.